We begin with the raw amino-acid sequence, 175 residues long: uncharacterized protein (175 aa).

2 helical membrane passes run 21–41 (IVLD…MGPI) and 50–70 (LVGL…VFVI).

It is found in the membrane. This is an uncharacterized protein from Saccharomyces cerevisiae (strain ATCC 204508 / S288c) (Baker's yeast).